The sequence spans 571 residues: Acetolactate synthase large subunit (571 aa).

Residue E51 participates in thiamine diphosphate binding. Residues R153, 261-282 (HGTYEANMTMHHADVIFAIGVR), and 304-323 (DIDPTSISKTVSANIPIVGD) contribute to the FAD site. The segment at 394–474 (QHQMFTALYY…VLILNLNNSS (81 aa)) is thiamine pyrophosphate binding. Mg(2+) is bound by residues D445 and N472.

The protein belongs to the TPP enzyme family. As to quaternary structure, dimer of large and small chains. It depends on Mg(2+) as a cofactor. Requires thiamine diphosphate as cofactor.

The enzyme catalyses 2 pyruvate + H(+) = (2S)-2-acetolactate + CO2. It participates in amino-acid biosynthesis; L-isoleucine biosynthesis; L-isoleucine from 2-oxobutanoate: step 1/4. Its pathway is amino-acid biosynthesis; L-valine biosynthesis; L-valine from pyruvate: step 1/4. This chain is Acetolactate synthase large subunit (ilvI), found in Buchnera aphidicola subsp. Acyrthosiphon pisum (strain APS) (Acyrthosiphon pisum symbiotic bacterium).